Consider the following 340-residue polypeptide: HTH-type transcriptional regulator PtxS (340 aa).

An HTH lacI-type domain is found at 12–67 (VTISEVAQAAGVSKATVSRYIGGDRQLLADATAQRIEAVIEQLGYRPNRMASALKR). Residues 14 to 33 (ISEVAQAAGVSKATVSRYIG) constitute a DNA-binding region (H-T-H motif).

In terms of assembly, homodimer.

With respect to regulation, 2-ketogluconate acts as a molecular effector and causes dissociation of PtxS from its target promoter. Glucose negatively affects the molecular binding of PtxS and 2KGA, and gluconic acid inhibits the PtxS-2KGA binding reaction. Involved in the regulation of 2-ketogluconic acid metabolism via the control of the expression of the kgu operon. Binds directly to a 14-bp palindrome sequence via its conserved HTH motif. This chain is HTH-type transcriptional regulator PtxS, found in Pseudomonas plecoglossicida.